Reading from the N-terminus, the 681-residue chain is MDDNTGTEGGACSESERAGGWFIVEAIVDRRTGDPISSDDDEEEDEAGEDFVDFIDDTRSLGDGQEVAQELFQQQTAADDDVAVQTVKRKFAPSPYFSPVCEQASIEHELSPRLDAIKLGRQSAKAKRRLFELPDSGYGQTQVDTESGPKQVQGSSETQDGRQDDDEGSVVQSTLDTGNQNGRQNNDEGSGRNVGEHGSQEEERAGGDGEESDLQSTSTGKGAGGVVEILRASNKKATLLGKFKEQFGLGYNELIRHFKSDRTSCADWVVCVFGVFCTVAEGIKTLIQPLCDYAHIQVLPCQWGMTVLMLVRYKRAKNRETVAKGLSTLLNVPESQMLIEPPKLRSGPAALYWYKTSMSSCSDVYGETPEWIVRQTMVGHAMEDAQFSLSEMVQWAYDHDITDESTLAYEYALIADTDSNAAAFLSSNCQAKYLKDACTMCRHYKRGEQARMSMSEWIWFRGDKVQGDGDWKPIVQFLRYQDVEFIPFLCAFKTFLQGVPKKSCLVFYGPADTGKSYFCMSLLRFLGGAVISYANSSSHFWLQPLSEAKIGLLDDATSQCWNYIDTYLRNALDGNQICVDRKHRALLQLKCPPLLITTNINPLTDERWKFLRSRLQLFTFKNPFPVTTQGEPMYTLNDQNWKCFFRRLWARLSLTDPEDEEEHGNPSEPFRCVPGQNARTI.

The Nuclear localization signal motif lies at 88–90; sequence KRK. Serine 94, serine 98, and serine 111 each carry phosphoserine; by host. Positions 110–119 match the Nuclear export signal motif; that stretch reads LSPRLDAIKL. Residues 124–221 form a disordered region; the sequence is AKAKRRLFEL…SDLQSTSTGK (98 aa). Polar residues-rich tracts occupy residues 138 to 158 and 170 to 184; these read YGQT…SSET and VVQS…NGRQ. The segment covering 185 to 207 has biased composition (basic and acidic residues); sequence NNDEGSGRNVGEHGSQEEERAGG. Residues 218 to 384 are DNA-binding region; sequence STGKGAGGVV…QTMVGHAMED (167 aa). Positions 483–633 constitute an SF3 helicase domain; sequence VEFIPFLCAF…FPVTTQGEPM (151 aa). Residue 509–516 participates in ATP binding; that stretch reads GPADTGKS. Lysine 590 participates in a covalent cross-link: Glycyl lysine isopeptide (Lys-Gly) (interchain with G-Cter in SUMO). Residues 657–681 are disordered; that stretch reads PEDEEEHGNPSEPFRCVPGQNARTI.

This sequence belongs to the papillomaviridae E1 protein family. As to quaternary structure, can form hexamers. Interacts with E2 protein; this interaction increases E1 DNA binding specificity. Interacts with host DNA polymerase subunit POLA2. Interacts with host single stranded DNA-binding protein RPA1. Interacts with host TOP1; this interaction stimulates the enzymatic activity of TOP1. In terms of processing, phosphorylated. Sumoylated.

It is found in the host nucleus. The enzyme catalyses Couples ATP hydrolysis with the unwinding of duplex DNA by translocating in the 3'-5' direction.. The catalysed reaction is ATP + H2O = ADP + phosphate + H(+). Functionally, ATP-dependent DNA 3'-5' helicase required for initiation of viral DNA replication. It forms a complex with the viral E2 protein. The E1-E2 complex binds to the replication origin which contains binding sites for both proteins. During the initial step, a dimer of E1 interacts with a dimer of protein E2 leading to a complex that binds the viral origin of replication with high specificity. Then, a second dimer of E1 displaces the E2 dimer in an ATP-dependent manner to form the E1 tetramer. Following this, two E1 monomers are added to each half of the site, which results in the formation of two E1 trimers on the viral ori. Subsequently, two hexamers will be created. The double hexamer acts as a bi-directional helicase machinery and unwinds the viral DNA and then recruits the host DNA polymerase to start replication. In Homo sapiens (Human), this protein is Replication protein E1.